The primary structure comprises 448 residues: Probable glycine dehydrogenase (decarboxylating) subunit 1 (448 aa).

Belongs to the GcvP family. N-terminal subunit subfamily. As to quaternary structure, the glycine cleavage system is composed of four proteins: P, T, L and H. In this organism, the P 'protein' is a heterodimer of two subunits.

It carries out the reaction N(6)-[(R)-lipoyl]-L-lysyl-[glycine-cleavage complex H protein] + glycine + H(+) = N(6)-[(R)-S(8)-aminomethyldihydrolipoyl]-L-lysyl-[glycine-cleavage complex H protein] + CO2. Functionally, the glycine cleavage system catalyzes the degradation of glycine. The P protein binds the alpha-amino group of glycine through its pyridoxal phosphate cofactor; CO(2) is released and the remaining methylamine moiety is then transferred to the lipoamide cofactor of the H protein. The chain is Probable glycine dehydrogenase (decarboxylating) subunit 1 from Listeria monocytogenes serovar 1/2a (strain ATCC BAA-679 / EGD-e).